A 444-amino-acid chain; its full sequence is CBL-interacting serine/threonine-protein kinase 1 (444 aa).

Residues 20 to 275 (YELGRTLGEG…VVGIKASEWF (256 aa)) enclose the Protein kinase domain. Residues 26–34 (LGEGNFGKV) and lysine 49 each bind ATP. The active-site Proton acceptor is the aspartate 143. The interval 161–190 (DFGLSALPQHFRDDGLLHTTCGSPNYVAPE) is activation loop. Serine 165 carries the phosphoserine modification. Phosphothreonine is present on threonine 179. In terms of domain architecture, NAF spans 313 to 337 (DSPTIINAFQLIGMSSFLDLSGFFE). Residues 343 to 372 (ERRIRFTSNSSAKDLLEKIETAVTEMGFSV) form a PPI region.

It belongs to the protein kinase superfamily. CAMK Ser/Thr protein kinase family. SNF1 subfamily. Interacts with CBL1. Interacts with CBL2. Interacts with CBL3. Interacts with CBL9. Interacts with ECT1 and ECT2. Mn(2+) is required as a cofactor. In terms of processing, autophosphorylated. Ubiquitous.

It catalyses the reaction L-seryl-[protein] + ATP = O-phospho-L-seryl-[protein] + ADP + H(+). It carries out the reaction L-threonyl-[protein] + ATP = O-phospho-L-threonyl-[protein] + ADP + H(+). In terms of biological role, CIPK serine-threonine protein kinases interact with CBL proteins. Binding of a CBL protein to the regulatory NAF domain of CIPK protein lead to the activation of the kinase in a calcium-dependent manner. This Arabidopsis thaliana (Mouse-ear cress) protein is CBL-interacting serine/threonine-protein kinase 1 (CIPK1).